Here is an 84-residue protein sequence, read N- to C-terminus: Alpha-mammal toxin Aah3 (84 aa).

The N-terminal stretch at 1–19 (MNYLVMISLALLLMTGVES) is a signal peptide. The LCN-type CS-alpha/beta domain occupies 21-82 (RDGYIVDSKN…PIKDPSYKCH (62 aa)). 4 cysteine pairs are disulfide-bonded: Cys31–Cys81, Cys35–Cys53, Cys39–Cys63, and Cys43–Cys65. Arg84 is a propeptide (removed by a carboxypeptidase).

The protein belongs to the long (4 C-C) scorpion toxin superfamily. Sodium channel inhibitor family. Alpha subfamily. As to expression, expressed by the venom gland.

It localises to the secreted. Its function is as follows. Alpha toxins bind voltage-independently at site-3 of sodium channels (Nav) and inhibit the inactivation of the activated channels, thereby blocking neuronal transmission. The protein is Alpha-mammal toxin Aah3 of Androctonus australis (Sahara scorpion).